The chain runs to 775 residues: ADP-ribosylation factor GTPase-activating protein AGD4 (775 aa).

A BAR domain is found at 2–226 (ATFINLEDSP…IHQILTYAQQ (225 aa)). Residues 288-421 (EVIKQGYLLK…WVNKITKAIG (134 aa)) form the PH domain. Residues 467–603 (DDVSTILRGL…ALVIKDESEA (137 aa)) form the Arf-GAP domain. Residues 482–505 (CAECNAPEPDWASLNLGVLLCIQC) form a C4-type zinc finger. ANK repeat units follow at residues 682–711 (QGCS…DLNI) and 715–744 (HGRT…RPSI).

Expressed in roots, hypocotyls, cotyledons, leaf and shoot apical meristems and siliques.

Its function is as follows. Probable GTPase-activating protein. The sequence is that of ADP-ribosylation factor GTPase-activating protein AGD4 (AGD4) from Arabidopsis thaliana (Mouse-ear cress).